A 448-amino-acid polypeptide reads, in one-letter code: Multiple inositol polyphosphate phosphatase 1 (448 aa).

The first 19 residues, 1–19 (MAPRRAACLLPLLVAVASA), serve as a signal peptide directing secretion. Residue histidine 69 is part of the active site. 4 N-linked (GlcNAc...) asparagine glycosylation sites follow: asparagine 203, asparagine 257, asparagine 409, and asparagine 441. A Prevents secretion from ER motif is present at residues 445-448 (ADEL).

It belongs to the histidine acid phosphatase family. MINPP1 subfamily. N-glycosylated. As to expression, present in growth plate chondrocytes but not detectable in articular chondrocytes (at protein level). Spatially restricted to chondrocytes in the lower portion of the proliferative zone and the upper portion of the hypertrophic zone in the growth plate of long bones (at protein level). Weakly expressed in kidney, liver, lung, skin and spleen, and not detected in brain, heart and muscle.

It is found in the endoplasmic reticulum lumen. The protein resides in the secreted. It localises to the cell membrane. The catalysed reaction is 1D-myo-inositol hexakisphosphate + H2O = 1D-myo-inositol 1,2,4,5,6-pentakisphosphate + phosphate. It carries out the reaction 1D-myo-inositol 1,2,4,5,6-pentakisphosphate + H2O = 1D-myo-inositol 1,2,5,6-tetrakisphosphate + phosphate. The enzyme catalyses 1D-myo-inositol 1,2,5,6-tetrakisphosphate + H2O = 1D-myo-inositol 1,2,6-trisphosphate + phosphate. It catalyses the reaction 1D-myo-inositol 1,2,6-trisphosphate + H2O = 1D-myo-inositol 1,2-bisphosphate + phosphate. The catalysed reaction is 1D-myo-inositol 1,2-bisphosphate + H2O = 1D-myo-inositol 2-phosphate + phosphate. It carries out the reaction 1D-myo-inositol hexakisphosphate + H2O = 1D-myo-inositol 1,2,3,5,6-pentakisphosphate + phosphate. The enzyme catalyses 1D-myo-inositol 1,2,3,5,6-pentakisphosphate + H2O = 1D-myo-inositol 1,2,3,6-tetrakisphosphate + phosphate. It catalyses the reaction 1D-myo-inositol 1,2,3,6-tetrakisphosphate + H2O = 1D-myo-inositol 1,2,3-trisphosphate + phosphate. The catalysed reaction is 1D-myo-inositol 1,2,3-trisphosphate + H2O = 1D-myo-inositol 2,3-bisphosphate + phosphate. It carries out the reaction 1D-myo-inositol 2,3-bisphosphate + H2O = 1D-myo-inositol 2-phosphate + phosphate. The enzyme catalyses 1D-myo-inositol 1,3,4,5,6-pentakisphosphate + H2O = 1D-myo-inositol 1,4,5,6-tetrakisphosphate + phosphate. It catalyses the reaction 1D-myo-inositol 1,4,5,6-tetrakisphosphate + H2O = 1D-myo-inositol 1,4,5-trisphosphate + phosphate. The catalysed reaction is (2R)-2,3-bisphosphoglycerate + H2O = (2R)-2-phosphoglycerate + phosphate. Multiple inositol polyphosphate phosphatase that hydrolyzes 1D-myo-inositol 1,3,4,5,6-pentakisphosphate (InsP5[2OH]) and 1D-myo-inositol hexakisphosphate (InsP6) to a range of less phosphorylated inositol phosphates. This regulates the availability of these various small molecule second messengers and metal chelators which control many aspects of cell physiology. Has a weak in vitro activity towards 1D-myo-inositol 1,4,5-trisphosphate which is unlikely to be physiologically relevant. By regulating intracellular inositol polyphosphates pools, which act as metal chelators, it may control the availability of intracellular calcium and iron, which are important for proper neuronal development and homeostasis. May have a dual substrate specificity, and function as a 2,3-bisphosphoglycerate 3-phosphatase hydrolyzing 2,3-bisphosphoglycerate to 2-phosphoglycerate. 2,3-bisphosphoglycerate (BPG) is formed as part of the Rapoport-Luebering glycolytic bypass and is a regulator of systemic oxygen homeostasis as the major allosteric effector of hemoglobin. In Gallus gallus (Chicken), this protein is Multiple inositol polyphosphate phosphatase 1 (MINPP1).